A 52-amino-acid polypeptide reads, in one-letter code: Ovomucoid (52 aa).

The region spanning 2–52 (VDCSEYPKPACPKDYRPVCGSDNKTYGNKCNFCNAVVESNGTLTLNRFGKC) is the Kazal-like domain. 3 cysteine pairs are disulfide-bonded: Cys4/Cys34, Cys12/Cys31, and Cys20/Cys52. Residue Asn41 is glycosylated (N-linked (GlcNAc...) asparagine).

It is found in the secreted. The polypeptide is Ovomucoid (Coturnix delegorguei (Harlequin quail)).